Here is a 147-residue protein sequence, read N- to C-terminus: Peptide methionine sulfoxide reductase MsrB (147 aa).

The MsrB domain occupies 25–147 (DEYWREHLTE…NSVSLIFNKK (123 aa)). Positions 64, 67, 113, and 116 each coordinate Zn(2+). The active-site Nucleophile is Cys-136.

This sequence belongs to the MsrB Met sulfoxide reductase family. The cofactor is Zn(2+).

It carries out the reaction L-methionyl-[protein] + [thioredoxin]-disulfide + H2O = L-methionyl-(R)-S-oxide-[protein] + [thioredoxin]-dithiol. This is Peptide methionine sulfoxide reductase MsrB from Vibrio cholerae serotype O1 (strain ATCC 39541 / Classical Ogawa 395 / O395).